We begin with the raw amino-acid sequence, 213 residues long: Small ribosomal subunit protein eS6 (213 aa).

Belongs to the eukaryotic ribosomal protein eS6 family.

The polypeptide is Small ribosomal subunit protein eS6 (Sulfolobus acidocaldarius (strain ATCC 33909 / DSM 639 / JCM 8929 / NBRC 15157 / NCIMB 11770)).